Reading from the N-terminus, the 324-residue chain is Galactosylgalactosylxylosylprotein 3-beta-glucuronosyltransferase 2 (324 aa).

Over methionine 1–lysine 2 the chain is Cytoplasmic. Residues serine 3–leucine 23 form a helical; Signal-anchor for type II membrane protein membrane-spanning segment. The Lumenal portion of the chain corresponds to aspartate 24–valine 324. The interval leucine 34–proline 78 is disordered. Asparagine 68 is a glycosylation site (N-linked (GlcNAc...) asparagine). Aspartate 188 lines the Mn(2+) pocket. Glutamate 274 functions as the Proton acceptor in the catalytic mechanism. A glycan (N-linked (GlcNAc...) asparagine) is linked at asparagine 293.

The protein belongs to the glycosyltransferase 43 family. Homodimer. Mn(2+) serves as cofactor. As to expression, expressed in the cerebral cortex, cerebellum and whole brain.

Its subcellular location is the golgi apparatus membrane. It catalyses the reaction 3-O-(beta-D-galactosyl-(1-&gt;3)-beta-D-galactosyl-(1-&gt;4)-beta-D-xylosyl)-L-seryl-[protein] + UDP-alpha-D-glucuronate = 3-O-(beta-D-GlcA-(1-&gt;3)-beta-D-Gal-(1-&gt;3)-beta-D-Gal-(1-&gt;4)-beta-D-Xyl)-L-seryl-[protein] + UDP + H(+). Its pathway is protein modification; protein glycosylation. Functionally, involved in the biosynthesis of L2/HNK-1 carbohydrate epitope on both glycolipids and glycoproteins. Substrates include asialo-orosomucoid (ASOR), paragloboside (lacto-N-neotetraosylceramide), Gal-beta-1,4-GlcNAc-beta-1,3-Gal-beta-1,4-Glc-pyridylamine and Gal-beta-1,3-GlcNAc-beta-1,3-Gal-beta-1,4-Glc-pyridylamine. In Rattus norvegicus (Rat), this protein is Galactosylgalactosylxylosylprotein 3-beta-glucuronosyltransferase 2 (B3gat2).